Here is a 561-residue protein sequence, read N- to C-terminus: DNA ligase B (561 aa).

The active-site N6-AMP-lysine intermediate is K128.

The protein belongs to the NAD-dependent DNA ligase family. LigB subfamily.

It carries out the reaction NAD(+) + (deoxyribonucleotide)n-3'-hydroxyl + 5'-phospho-(deoxyribonucleotide)m = (deoxyribonucleotide)n+m + AMP + beta-nicotinamide D-nucleotide.. In terms of biological role, catalyzes the formation of phosphodiester linkages between 5'-phosphoryl and 3'-hydroxyl groups in double-stranded DNA using NAD as a coenzyme and as the energy source for the reaction. The chain is DNA ligase B from Pseudomonas syringae pv. tomato (strain ATCC BAA-871 / DC3000).